Consider the following 418-residue polypeptide: ATP phosphoribosyltransferase regulatory subunit (418 aa).

This sequence belongs to the class-II aminoacyl-tRNA synthetase family. HisZ subfamily. In terms of assembly, heteromultimer composed of HisG and HisZ subunits.

The protein resides in the cytoplasm. It participates in amino-acid biosynthesis; L-histidine biosynthesis; L-histidine from 5-phospho-alpha-D-ribose 1-diphosphate: step 1/9. In terms of biological role, required for the first step of histidine biosynthesis. May allow the feedback regulation of ATP phosphoribosyltransferase activity by histidine. The sequence is that of ATP phosphoribosyltransferase regulatory subunit from Halothermothrix orenii (strain H 168 / OCM 544 / DSM 9562).